The sequence spans 867 residues: Bifunctional cis-abienol synthase, chloroplastic (867 aa).

The N-terminal 49 residues, 1–49, are a transit peptide targeting the chloroplast; sequence MALPVYSLKSHIPITTIASAKMNYTPNKGMITANGRSRRIRLSPNKIVA. A substrate-binding site is contributed by K270. The DXDD motif signature appears at 403 to 406; it reads DIDD. A substrate-binding site is contributed by K490. Residues D622, D626, N763, D764, T767, and E771 each contribute to the Mg(2+) site. A DDXXD motif motif is present at residues 622–626; it reads DDLYD.

It belongs to the terpene synthase family. Tpsd subfamily. Mg(2+) is required as a cofactor.

Its subcellular location is the plastid. The protein localises to the chloroplast. It carries out the reaction 8-hydroxycopalyl diphosphate = cis-abienol + diphosphate. The catalysed reaction is (2E,6E,10E)-geranylgeranyl diphosphate + H2O = 8-hydroxycopalyl diphosphate. Its pathway is terpene metabolism; oleoresin biosynthesis. Involved in the biosynthesis of cis-abienol, a labdane diterpene that can be used as synthesis precursor of ambergris substitution fragance products. Bifunctional class I/II enzyme in which both the bicyclization and water capture occur in the class II active site, resulting in an intermediary labda-13-en-8-ol diphosphate, which undergoes cleavage of the diphosphate group and final deprotonation at the class I active site. No activity with copalyl diphosphate as substrate. This chain is Bifunctional cis-abienol synthase, chloroplastic (CAS), found in Abies balsamea (Balsam fir).